The primary structure comprises 904 residues: Envelope glycoprotein B (904 aa).

The N-terminal stretch at 1 to 30 (MRQGAPARGRRWFVVWALLGLTLGVLVASA) is a signal peptide. Low complexity predominate over residues 31 to 52 (APSSPGTPGVAAATQAANGGPA). Positions 31–88 (APSSPGTPGVAAATQAANGGPATPAPPAPGAPPTGDPKPKKNRKPKPPKPPRPAGDNA) are disordered. Residues 31–774 (APSSPGTPGV…SGVSSFMSNP (744 aa)) lie on the Virion surface side of the membrane. Residues 53–66 (TPAPPAPGAPPTGD) are compositionally biased toward pro residues. The span at 70–79 (KKNRKPKPPK) shows a compositional bias: basic residues. 2 N-linked (GlcNAc...) asparagine; by host glycosylation sites follow: asparagine 87 and asparagine 141. 5 cysteine pairs are disulfide-bonded: cysteine 116-cysteine 573, cysteine 133-cysteine 529, cysteine 207-cysteine 271, cysteine 364-cysteine 412, and cysteine 596-cysteine 633. Involved in fusion and/or binding to host membrane regions lie at residues 173–179 (VWFGHRY) and 258–265 (RVEAFHRY). Residues asparagine 398 and asparagine 430 are each glycosylated (N-linked (GlcNAc...) asparagine; by host). A disordered region spans residues 470-492 (REQSRKPPNPTPPPPGASANASV). Positions 476–485 (PPNPTPPPPG) are enriched in pro residues. Asparagine 489 carries N-linked (GlcNAc...) asparagine; by host glycosylation. N-linked (GlcNAc...) asparagine; by host glycosylation occurs at asparagine 674. Residues 719-772 (IDTVIHADANAAMFAGLGAFFEGMGDLGRAVGKVVMGIVGGVVSAVSGVSSFMS) form a hydrophobic membrane proximal region region. The helical transmembrane segment at 775–795 (FGALAVGLLVLAGLAAAFFAF) threads the bilayer. Residues 796-904 (RYVMRLQSNP…KDGDADEDDL (109 aa)) are Intravirion-facing. Positions 849 to 852 (YMAL) match the Golgi targeting motif. Positions 883–904 (KRRNTNYTQVPNKDGDADEDDL) are disordered. The short motif at 889 to 892 (YTQV) is the Internalization motif element.

The protein belongs to the herpesviridae glycoprotein B family. As to quaternary structure, homotrimer; disulfide-linked. Interacts with host receptor MYH9/NMMHC-IIA. Interacts with host receptor MYH10/NMMHC-IIB. Binds to heparan sulfate proteoglycans. Interacts with gH/gL heterodimer. Interacts with host DEFA1, DEFA2 and DEFA3; these interactions inhibit viral infection. Post-translationally, the cytoplasmic tail is phosphorylated by the viral kinase US3. Phosphorylation may be linked to a down-regulation of gB expression on cell surface. Ubiquitinated.

The protein resides in the virion membrane. It localises to the host cell membrane. Its subcellular location is the host endosome membrane. It is found in the host Golgi apparatus membrane. Envelope glycoprotein that forms spikes at the surface of virion envelope and binds to the host cell entry receptors MYH9/NMMHC-IIA and MYH10/NMMHC-IIB, promoting the virus entry into host cells. Essential for the initial attachment to heparan sulfate moieties of the host cell surface proteoglycans. Involved in fusion of viral and cellular membranes leading to virus entry into the host cell: following initial binding to its host cell entry receptors, membrane fusion is mediated by the fusion machinery composed at least of gB and the heterodimer gH/gL. May be involved in the fusion between the virion envelope and the outer nuclear membrane during virion egress. Also plays a role, together with gK, in virus-induced cell-to-cell fusion (syncytia formation). The protein is Envelope glycoprotein B of Homo sapiens (Human).